A 401-amino-acid polypeptide reads, in one-letter code: Patatin-like protein 4 (401 aa).

The PNPLA domain occupies 17–218; that stretch reads LSLDGGGVRG…TANDPTLVGM (202 aa). Positions 21 to 26 match the GXGXXG motif; that stretch reads GGGVRG. The short motif at 60–64 is the GXSXG element; that stretch reads GTSTG. Serine 62 serves as the catalytic Nucleophile. Residue aspartate 205 is the Proton acceptor of the active site. The short motif at 205–207 is the DGA/G element; it reads DGG.

This sequence belongs to the patatin family.

Functionally, possesses non-specific lipolytic acyl hydrolase (LAH) activity. Hydrolyzes phospholipids as well as galactolipids. May play a role in disease resistance. This Arabidopsis thaliana (Mouse-ear cress) protein is Patatin-like protein 4 (PLP4).